The primary structure comprises 523 residues: Apoptosis inhibitor 5-B (523 aa).

The tract at residues 1-360 is ARM-like and Heat-like helical repeats; the sequence is MPTVEELYRN…HQLGRKLPDF (360 aa). The disordered stretch occupies residues 446 to 523; the sequence is VQKTDSGQKR…RGNRSRGRIY (78 aa). The short motif at 454–475 is the Nuclear localization signal element; sequence KRMSDETSSTSPPKKPVVGPKR. Gly residues predominate over residues 502-515; it reads GFQGGRGRGWGGRG.

This sequence belongs to the API5 family. Monomer.

The protein localises to the nucleus. In terms of biological role, may be an antiapoptotic factor. The protein is Apoptosis inhibitor 5-B (api5-b) of Xenopus laevis (African clawed frog).